The primary structure comprises 261 residues: Hydroxyethylthiazole kinase (261 aa).

Position 38 (Met-38) interacts with substrate. 2 residues coordinate ATP: Arg-114 and Thr-159. Gly-186 provides a ligand contact to substrate.

Belongs to the Thz kinase family. Mg(2+) serves as cofactor.

The catalysed reaction is 5-(2-hydroxyethyl)-4-methylthiazole + ATP = 4-methyl-5-(2-phosphooxyethyl)-thiazole + ADP + H(+). The protein operates within cofactor biosynthesis; thiamine diphosphate biosynthesis; 4-methyl-5-(2-phosphoethyl)-thiazole from 5-(2-hydroxyethyl)-4-methylthiazole: step 1/1. In terms of biological role, catalyzes the phosphorylation of the hydroxyl group of 4-methyl-5-beta-hydroxyethylthiazole (THZ). This chain is Hydroxyethylthiazole kinase, found in Streptococcus suis (strain 05ZYH33).